Consider the following 173-residue polypeptide: NADH-ubiquinone oxidoreductase chain 6 (173 aa).

Helical transmembrane passes span 1–21, 27–47, 48–68, 87–107, and 139–159; these read MTYFVIFLGVCFMLGTLAVAS, YGVVGLVLASVVGCGWLVNLG, VSFVSLVLFMIYLGGMLVVFV, VMGYGLGFVLVVCMGMGLGGF, and YGVGLFLVAGWGLLLVLFVVL.

It belongs to the complex I subunit 6 family.

Its subcellular location is the mitochondrion membrane. The enzyme catalyses a ubiquinone + NADH + 5 H(+)(in) = a ubiquinol + NAD(+) + 4 H(+)(out). Its function is as follows. Core subunit of the mitochondrial membrane respiratory chain NADH dehydrogenase (Complex I) that is believed to belong to the minimal assembly required for catalysis. Complex I functions in the transfer of electrons from NADH to the respiratory chain. The immediate electron acceptor for the enzyme is believed to be ubiquinone. The sequence is that of NADH-ubiquinone oxidoreductase chain 6 (MT-ND6) from Coturnix japonica (Japanese quail).